We begin with the raw amino-acid sequence, 211 residues long: Glycerol-3-phosphate acyltransferase (211 aa).

Transmembrane regions (helical) follow at residues 8 to 28 (YCLA…LILT), 84 to 104 (LALP…WLGF), 116 to 136 (VLLA…FAVA), 145 to 165 (AALC…GMGL), and 170 to 190 (LAQS…LVFL).

It belongs to the PlsY family. Probably interacts with PlsX.

The protein localises to the cell inner membrane. The catalysed reaction is an acyl phosphate + sn-glycerol 3-phosphate = a 1-acyl-sn-glycero-3-phosphate + phosphate. The protein operates within lipid metabolism; phospholipid metabolism. Functionally, catalyzes the transfer of an acyl group from acyl-phosphate (acyl-PO(4)) to glycerol-3-phosphate (G3P) to form lysophosphatidic acid (LPA). This enzyme utilizes acyl-phosphate as fatty acyl donor, but not acyl-CoA or acyl-ACP. The sequence is that of Glycerol-3-phosphate acyltransferase from Granulibacter bethesdensis (strain ATCC BAA-1260 / CGDNIH1).